The primary structure comprises 122 residues: Putative iron-sulfur cluster insertion protein ErpA (122 aa).

Positions 50, 114, and 116 each coordinate iron-sulfur cluster.

This sequence belongs to the HesB/IscA family. As to quaternary structure, homodimer. The cofactor is iron-sulfur cluster.

In terms of biological role, required for insertion of 4Fe-4S clusters. This chain is Putative iron-sulfur cluster insertion protein ErpA, found in Burkholderia mallei (strain NCTC 10247).